Consider the following 331-residue polypeptide: Phosphoribosylformylglycinamidine cyclo-ligase (331 aa).

It belongs to the AIR synthase family.

The protein resides in the cytoplasm. It catalyses the reaction 2-formamido-N(1)-(5-O-phospho-beta-D-ribosyl)acetamidine + ATP = 5-amino-1-(5-phospho-beta-D-ribosyl)imidazole + ADP + phosphate + H(+). It functions in the pathway purine metabolism; IMP biosynthesis via de novo pathway; 5-amino-1-(5-phospho-D-ribosyl)imidazole from N(2)-formyl-N(1)-(5-phospho-D-ribosyl)glycinamide: step 2/2. This is Phosphoribosylformylglycinamidine cyclo-ligase from Clostridium botulinum (strain ATCC 19397 / Type A).